Reading from the N-terminus, the 503-residue chain is MPVPPPPAPPPPPTFALANTEKPTLNKTEQAGRNALLSDISKGKKLKKTVTNDRSAPILDKPKGAGAGGGGGGFGGGGGFGGGGGGGGGGSFGGGGPPGLGGLFQAGMPKLRSTANRDNDSGGSRPPLLPPGGRSTSAKPFSPPSGPGRFPVPSPGHRSGPPEPQRNRMPPPRPDVGSKPDSIPPPVPSTPRPIQSSPHNRGSPPVPGGPRQPSPGPTPPPFPGNRGTALGGGSIRQSPLSSSSPFSNRPPLPPTPSRALDDKPPPPPPPVGNRPSIHREAVPPPPPQNNKPPVPSTPRPSASSQAPPPPPPPSRPGPPPLPPSSSGNDETPRLPQRNLSLSSSTPPLPSPGRSGPLPPPPSERPPPPVRDPPGRSGPLPPPPPVSRNGSTSRALPATPQLPSRSGVDSPRSGPRPPLPPDRPSAGAPPPPPPSTSIRNGFQDSPCEDEWESRFYFHPISDLPPPEPYVQTTKSYPSKLARNESRSGSNRRERGAPPLPPIPR.

The segment covering 1–14 has biased composition (pro residues); that stretch reads MPVPPPPAPPPPPT. A disordered region spans residues 1–503; that stretch reads MPVPPPPAPP…GAPPLPPIPR (503 aa). The span at 21 to 31 shows a compositional bias: polar residues; that stretch reads EKPTLNKTEQA. The WH2 domain maps to 32–49; that stretch reads GRNALLSDISKGKKLKKT. Arg33 carries the asymmetric dimethylarginine modification. The interval 45-48 is binds actin; sequence KLKK. The segment covering 65 to 104 has biased composition (gly residues); that stretch reads AGAGGGGGGFGGGGGFGGGGGGGGGGSFGGGGPPGLGGLF. The segment covering 121 to 137 has biased composition (low complexity); that stretch reads SGGSRPPLLPPGGRSTS. Residues Arg125 and Arg134 each carry the omega-N-methylarginine modification. Pro residues-rich tracts occupy residues 141–154, 161–174, 182–191, and 204–223; these read FSPP…PVPS, PPEP…PPRP, SIPPPVPSTP, and PPVP…PPFP. Ser142 is modified (phosphoserine). Ser234 is subject to Phosphoserine. Residues 238 to 247 show a composition bias toward low complexity; that stretch reads SPLSSSSPFS. Composition is skewed to pro residues over residues 282–298 and 306–323; these read VPPP…PSTP and APPP…PLPP. At Ser340 the chain carries Phosphoserine. Phosphothreonine is present on Thr345. The segment covering 346 to 371 has biased composition (pro residues); it reads PPLPSPGRSGPLPPPPSERPPPPVRD. Ser350 carries the post-translational modification Phosphoserine. 3 XRSGPXPPXP motif repeats span residues 352 to 361, 374 to 383, and 410 to 419; these read GRSGPLPPPP and PRSGPRPPLP. The segment covering 413–434 has biased composition (pro residues); that stretch reads GPRPPLPPDRPSAGAPPPPPPS. Over residues 480–494 the composition is skewed to basic and acidic residues; it reads ARNESRSGSNRRERG.

Belongs to the verprolin family. Binds to WAS, profilin and actin. Binds to WASL. Interacts with DBNL. Interacts with FNBP1L (via the SH3 domain). In terms of tissue distribution, highly expressed in peripheral blood mononuclear cells, spleen, placenta, small intestine, colon and thymus. Lower expression in ovary, heart, brain, lung, liver, skeletal muscle, kidney, pancreas, prostate and testis.

Its subcellular location is the cytoplasmic vesicle. The protein localises to the cytoplasm. It localises to the cytoskeleton. The protein resides in the cell projection. It is found in the ruffle. Plays a role in the reorganization of the actin cytoskeleton. Contributes with NCK1 and GRB2 in the recruitment and activation of WASL. May participate in regulating the subcellular localization of WASL, resulting in the disassembly of stress fibers in favor of filopodia formation. Plays a role in the formation of cell ruffles. Plays an important role in the intracellular motility of vaccinia virus by functioning as an adapter for recruiting WASL to vaccinia virus. The polypeptide is WAS/WASL-interacting protein family member 1 (WIPF1) (Homo sapiens (Human)).